We begin with the raw amino-acid sequence, 104 residues long: Proteasome subunit beta type-8 (104 aa).

The protein belongs to the peptidase T1B family. The 26S proteasome consists of a 20S proteasome core and two 19S regulatory subunits. The 20S proteasome core is composed of 28 subunits that are arranged in four stacked rings, resulting in a barrel-shaped structure. The two end rings are each formed by seven alpha subunits, and the two central rings are each formed by seven beta subunits. The catalytic chamber with the active sites is on the inside of the barrel. Component of the immunoproteasome, where it displaces the equivalent housekeeping subunit PSMB5. Component of the spermatoproteasome, a form of the proteasome specifically found in testis. Directly interacts with POMP.

The protein localises to the cytoplasm. Its subcellular location is the nucleus. It catalyses the reaction Cleavage of peptide bonds with very broad specificity.. The proteasome is a multicatalytic proteinase complex which is characterized by its ability to cleave peptides with Arg, Phe, Tyr, Leu, and Glu adjacent to the leaving group at neutral or slightly basic pH. The proteasome has an ATP-dependent proteolytic activity. This subunit is involved in antigen processing to generate class I binding peptides. May participate in the generation of spliced peptides resulting from the ligation of two separate proteasomal cleavage products that are not contiguous in the parental protein. Required for adipocyte differentiation. The chain is Proteasome subunit beta type-8 (PSMB8) from Sus scrofa (Pig).